Reading from the N-terminus, the 154-residue chain is Ribonuclease H (154 aa).

The 142-residue stretch at 1-142 (MLKHIDLYTD…CDELARDAAS (142 aa)) folds into the RNase H type-1 domain. Residues Asp10, Glu48, Asp70, and Asp134 each coordinate Mg(2+). A compositionally biased stretch (basic and acidic residues) spans 126–147 (GHPENERCDELARDAASGKELA). Residues 126 to 154 (GHPENERCDELARDAASGKELAEDTGYQP) are disordered.

This sequence belongs to the RNase H family. In terms of assembly, monomer. The cofactor is Mg(2+).

It localises to the cytoplasm. The catalysed reaction is Endonucleolytic cleavage to 5'-phosphomonoester.. Endonuclease that specifically degrades the RNA of RNA-DNA hybrids. The polypeptide is Ribonuclease H (Aeromonas salmonicida (strain A449)).